Here is a 337-residue protein sequence, read N- to C-terminus: MKKMPLFSKSHKNPAEIVKILKDNLAILEKQDKKTDKASEEVSKSLQAMKEILCGTNEKEPPTEAVAQLAQELYSSGLLVTLIADLQLIDFEGKKDVTQIFNNILRRQIGTRSPTVEYISAHPHILFMLLKGYEAPQIALRCGIMLRECIRHEPLAKIILFSNQFRDFFKYVELSTFDIASDAFATFKDLLTRHKVLVADFLEQNYDTIFEDYEKLLQSENYVTKRQSLKLLGELILDRHNFAIMTKYISKPENLKLMMNLLRDKSPNIQFEAFHVFKVFVASPHKTQPIVEILLKNQPKLIEFLSSFQKERTDDEQFADEKNYLIKQIRDLKKTAP.

Belongs to the Mo25 family. In terms of assembly, component of a trimeric complex composed of STK11/LKB1, STRAD (STRADA or STRADB) and CAB39/MO25 (CAB39/MO25alpha or CAB39L/MO25beta): the complex tethers STK11/LKB1 in the cytoplasm and stimulates its catalytic activity.

In terms of biological role, component of a complex that binds and activates STK11/LKB1. In the complex, required to stabilize the interaction between CAB39/MO25 (CAB39/MO25alpha or CAB39L/MO25beta) and STK11/LKB1. The protein is Calcium-binding protein 39-like (CAB39L) of Homo sapiens (Human).